Reading from the N-terminus, the 189-residue chain is MDAVDATVEKLRAQCLSRGALGIQGLARFFRRLDRDRSRSLDSRELQRGLAELGLVLDTAEAEGVCRRWDRDGSGTLDLEEFLRALRPPMSQAREAVIAAAFAKLDRSGDGVVTVDDLRGVYSGRTHPKVQSGEWTEEEVLRRFLDNFDSSEKDGQVTLAEFQDYYSGVSASMDTDEEFVAMMTSAWQL.

EF-hand domains are found at residues 21 to 56 (LGIQ…LGLV), 57 to 92 (LDTA…PMSQ), 93 to 128 (AREA…RTHP), and 136 to 172 (TEEE…VSAS). Ca(2+) is bound by residues Asp-34, Asp-36, Ser-38, Ser-40, Glu-45, Asp-70, Asp-72, Ser-74, Thr-76, Glu-81, Asp-106, Ser-108, Asp-110, and Asp-117. Residue Ser-40 is modified to Phosphoserine; by PKA.

In terms of assembly, monomer. Does not form oligomers in the presence of calcium. Post-translationally, phosphorylated in response to thyrotropin and cAMP. Detected in thyroid, salivary gland, lung, brain and cerebellum (at protein level).

It is found in the cytoplasm. Its function is as follows. Calcium-binding protein. May play a role in cellular signaling events (Potential). This chain is Calcyphosin (CAPS), found in Canis lupus familiaris (Dog).